The primary structure comprises 235 residues: Carboxy-S-adenosyl-L-methionine synthase (235 aa).

S-adenosyl-L-methionine-binding positions include Tyr-35, 60–62 (GCS), 84–85 (DN), 110–111 (DI), Asn-125, and Arg-192.

It belongs to the class I-like SAM-binding methyltransferase superfamily. Cx-SAM synthase family. As to quaternary structure, homodimer.

It catalyses the reaction prephenate + S-adenosyl-L-methionine = carboxy-S-adenosyl-L-methionine + 3-phenylpyruvate + H2O. In terms of biological role, catalyzes the conversion of S-adenosyl-L-methionine (SAM) to carboxy-S-adenosyl-L-methionine (Cx-SAM). The chain is Carboxy-S-adenosyl-L-methionine synthase from Sulfurimonas denitrificans (strain ATCC 33889 / DSM 1251) (Thiomicrospira denitrificans (strain ATCC 33889 / DSM 1251)).